Consider the following 448-residue polypeptide: Adenylosuccinate synthetase (448 aa).

GTP is bound by residues G22–K28 and G50–T52. The Proton acceptor role is filled by D23. 2 residues coordinate Mg(2+): D23 and G50. IMP contacts are provided by residues D23 to K26, N48 to H51, T139, R153, Q234, T249, and R321. Catalysis depends on H51, which acts as the Proton donor. S317–R323 contributes to the substrate binding site. GTP is bound by residues R323, K349 to D351, and S431 to G433.

The protein belongs to the adenylosuccinate synthetase family. In terms of assembly, homodimer. It depends on Mg(2+) as a cofactor.

It localises to the cytoplasm. It carries out the reaction IMP + L-aspartate + GTP = N(6)-(1,2-dicarboxyethyl)-AMP + GDP + phosphate + 2 H(+). It participates in purine metabolism; AMP biosynthesis via de novo pathway; AMP from IMP: step 1/2. Plays an important role in the de novo pathway of purine nucleotide biosynthesis. Catalyzes the first committed step in the biosynthesis of AMP from IMP. In Paraburkholderia phytofirmans (strain DSM 17436 / LMG 22146 / PsJN) (Burkholderia phytofirmans), this protein is Adenylosuccinate synthetase.